A 986-amino-acid chain; its full sequence is Ephrin type-A receptor 4 (986 aa).

The first 19 residues, 1–19, serve as a signal peptide directing secretion; sequence MAGIFYFALFSCLFGICDA. Topologically, residues 20 to 547 are extracellular; sequence VTGSRVYPAN…RIIGDGANST (528 aa). The Eph LBD domain occupies 30–209; sequence EVTLLDSRSV…FYKKCPLTVR (180 aa). N-linked (GlcNAc...) asparagine glycans are attached at residues N235, N340, and N408. 2 consecutive Fibronectin type-III domains span residues 328 to 439 and 440 to 537; these read PPSA…TNQA and APSS…TVPS. N545 carries an N-linked (GlcNAc...) asparagine glycan. The chain crosses the membrane as a helical span at residues 548-569; that stretch reads VLLVSVSGSVVLVVILIAAFVI. The Cytoplasmic segment spans residues 570–986; that stretch reads SRRRSKYSKA…QQMHGRMVPV (417 aa). Y596 and Y602 each carry phosphotyrosine; by autocatalysis. Residues 621 to 882 enclose the Protein kinase domain; it reads IKIEKVIGVG…QIVNMLDKLI (262 aa). ATP is bound by residues 627–635 and K653; that span reads IGVGEFGEV. D746 serves as the catalytic Proton acceptor. A phosphotyrosine; by autocatalysis mark is found at Y779 and Y928. The SAM domain occupies 911-975; sequence SAVVSVGDWL…LSSVQAMRTQ (65 aa). The PDZ-binding signature appears at 984–986; it reads VPV.

Belongs to the protein kinase superfamily. Tyr protein kinase family. Ephrin receptor subfamily. In terms of assembly, heterotetramer upon binding of the ligand. The heterotetramer is composed of an ephrin dimer and a receptor dimer. Oligomerization is probably required to induce biological responses. Interacts (phosphorylated at position Tyr-602) with FYN. Interacts with CDK5, CDK5R1 and NGEF; upon activation by EFNA1 induces NGEF phosphorylation by the kinase CDK5. Interacts with CHN1; effector of EPHA4 in axon guidance linking EPHA4 activation to RAC1 regulation. Interacts (via PDZ motif) with SIPA1L1 (via PDZ domain); controls neuronal morphology through regulation of the RAP1 (RAP1A or RAP1B) and RAP2 (RAP2A, RAP2B or RAP2C) GTPases. Forms a ternary complex composed of ADAM10, CADH1 and EPHA4; within the complex, CADH1 is cleaved by ADAM10 which disrupts adherens junctions. As to expression, ubiquitous.

The protein resides in the cell membrane. Its subcellular location is the cell projection. The protein localises to the axon. It localises to the dendrite. It is found in the postsynaptic density membrane. The protein resides in the early endosome. Its subcellular location is the cell junction. The protein localises to the adherens junction. It catalyses the reaction L-tyrosyl-[protein] + ATP = O-phospho-L-tyrosyl-[protein] + ADP + H(+). Functionally, receptor tyrosine kinase which binds membrane-bound ephrin family ligands residing on adjacent cells, leading to contact-dependent bidirectional signaling into neighboring cells. The signaling pathway downstream of the receptor is referred to as forward signaling while the signaling pathway downstream of the ephrin ligand is referred to as reverse signaling. Highly promiscuous, it has the unique property among Eph receptors to bind and to be physiologically activated by both GPI-anchored ephrin-A and transmembrane ephrin-B ligands including EFNA1 and EFNB3. Upon activation by ephrin ligands, modulates cell morphology and integrin-dependent cell adhesion through regulation of the Rac, Rap and Rho GTPases activity. Plays an important role in the development of the nervous system controlling different steps of axonal guidance including the establishment of the corticospinal projections. May also control the segregation of motor and sensory axons during neuromuscular circuit development. In addition to its role in axonal guidance plays a role in synaptic plasticity. Activated by EFNA1 phosphorylates CDK5 at 'Tyr-15' which in turn phosphorylates NGEF regulating RHOA and dendritic spine morphogenesis. In the nervous system, also plays a role in repair after injury preventing axonal regeneration and in angiogenesis playing a role in central nervous system vascular formation. Additionally, its promiscuity makes it available to participate in a variety of cell-cell signaling regulating for instance the development of the thymic epithelium. During development of the cochlear organ of Corti, regulates pillar cell separation by forming a ternary complex with ADAM10 and CADH1 which facilitates the cleavage of CADH1 by ADAM10 and disruption of adherens junctions. Phosphorylates CAPRIN1, promoting CAPRIN1-dependent formation of a membraneless compartment. This chain is Ephrin type-A receptor 4 (EPHA4), found in Homo sapiens (Human).